Reading from the N-terminus, the 420-residue chain is 4-hydroxy-3-methylbut-2-en-1-yl diphosphate synthase (flavodoxin) (420 aa).

[4Fe-4S] cluster is bound by residues C307, C310, C353, and E360.

The protein belongs to the IspG family. [4Fe-4S] cluster serves as cofactor.

It carries out the reaction (2E)-4-hydroxy-3-methylbut-2-enyl diphosphate + oxidized [flavodoxin] + H2O + 2 H(+) = 2-C-methyl-D-erythritol 2,4-cyclic diphosphate + reduced [flavodoxin]. The protein operates within isoprenoid biosynthesis; isopentenyl diphosphate biosynthesis via DXP pathway; isopentenyl diphosphate from 1-deoxy-D-xylulose 5-phosphate: step 5/6. Functionally, converts 2C-methyl-D-erythritol 2,4-cyclodiphosphate (ME-2,4cPP) into 1-hydroxy-2-methyl-2-(E)-butenyl 4-diphosphate. The polypeptide is 4-hydroxy-3-methylbut-2-en-1-yl diphosphate synthase (flavodoxin) (Brucella suis (strain ATCC 23445 / NCTC 10510)).